The chain runs to 542 residues: NXPE family member 4 (542 aa).

The N-terminal stretch at 1 to 26 (MKMMASRKSLWVLLFIVIFWISFTVF) is a signal peptide. N-linked (GlcNAc...) asparagine glycosylation is found at N91, N92, N159, and N223.

It belongs to the NXPE family.

Its subcellular location is the secreted. In Rattus norvegicus (Rat), this protein is NXPE family member 4 (Nxpe4).